Here is a 556-residue protein sequence, read N- to C-terminus: MNIAEQMKDVLKEEIKAAVLKAGLADESQIPSVLLETPKEKTHGDYSTNMAMQLARIAKKAPRQIAEEIVASFDKGKASIEKMDIAGPGFINFYMNNSYLTKLIPSVLEAGEHYGETNIGQGEKIQVEFVSANPTGDLHLGHARGAAVGDALCSVLSKAGYDVSREYYINDAGNQINNLALSVEVRYFEALGLEKPMPEDGYRGEDIIAIGKKLAEDFGDRFVHEEESERQAFFREYGLKYELDKLRSDLENFRVPFDVWYSETSLYENGKIDQALEALREKGHVYEEDGATWFRSTTFGDDKDRVLIKKDGSYTYLLPDIAYHKDKLDRGFDKLINVWGADHHGYIPRMKAAIEALGYKKGTLEVEIIQLVHLYKNGEKMKMSKRTGKAVTMRDLIEEVGLDAVRYFFAMRSADTHMDFDLDLAVSTSNENPVYYAQYAHARICSMLRQGEEQGLKPAADLDFSHIQSEKEYDLLKTIGGFPEAVAEAAEKRIPHRVTNYIYDLASALHSFYNAEKVIDPENKEKSRARLALMKATQITLNNALQLIGVSAPEKM.

Positions 132–142 match the 'HIGH' region motif; sequence ANPTGDLHLGH.

Belongs to the class-I aminoacyl-tRNA synthetase family. As to quaternary structure, monomer.

It is found in the cytoplasm. The enzyme catalyses tRNA(Arg) + L-arginine + ATP = L-arginyl-tRNA(Arg) + AMP + diphosphate. The chain is Arginine--tRNA ligase from Bacillus velezensis (strain DSM 23117 / BGSC 10A6 / LMG 26770 / FZB42) (Bacillus amyloliquefaciens subsp. plantarum).